Reading from the N-terminus, the 286-residue chain is Pyridoxal kinase PdxY (286 aa).

Substrate contacts are provided by residues S9 and 44–45 (TQ). ATP contacts are provided by residues D111, A143, E148, K181, and 208 to 211 (RPLV). D223 serves as a coordination point for substrate.

It belongs to the pyridoxine kinase family. PdxY subfamily. As to quaternary structure, homodimer. The cofactor is Mg(2+).

The catalysed reaction is pyridoxal + ATP = pyridoxal 5'-phosphate + ADP + H(+). It participates in cofactor metabolism; pyridoxal 5'-phosphate salvage; pyridoxal 5'-phosphate from pyridoxal: step 1/1. Its function is as follows. Pyridoxal kinase involved in the salvage pathway of pyridoxal 5'-phosphate (PLP). Catalyzes the phosphorylation of pyridoxal to PLP. The chain is Pyridoxal kinase PdxY from Salmonella paratyphi A (strain ATCC 9150 / SARB42).